Consider the following 391-residue polypeptide: Polyisoprenyl-teichoic acid--peptidoglycan teichoic acid transferase TagV (391 aa).

The Cytoplasmic portion of the chain corresponds to methionine 1–arginine 23. Residues isoleucine 24–tyrosine 44 form a helical; Signal-anchor for type II membrane protein membrane-spanning segment. Residues lysine 45 to tyrosine 391 are Extracellular-facing. The tract at residues aspartate 329–tyrosine 391 is disordered. The segment covering aspartate 333 to tyrosine 391 has biased composition (low complexity).

It belongs to the LytR/CpsA/Psr (LCP) family.

Its subcellular location is the cell membrane. Its pathway is cell wall biogenesis. May catalyze the final step in cell wall teichoic acid biosynthesis, the transfer of the anionic cell wall polymers (APs) from their lipid-linked precursor to the cell wall peptidoglycan (PG). The chain is Polyisoprenyl-teichoic acid--peptidoglycan teichoic acid transferase TagV from Bacillus subtilis (strain 168).